Here is a 79-residue protein sequence, read N- to C-terminus: Sulfur carrier protein TusA (79 aa).

Cys-17 acts as the Cysteine persulfide intermediate in catalysis.

This sequence belongs to the sulfur carrier protein TusA family.

It is found in the cytoplasm. Functionally, sulfur carrier protein which probably makes part of a sulfur-relay system. The sequence is that of Sulfur carrier protein TusA from Actinobacillus pleuropneumoniae serotype 5b (strain L20).